A 259-amino-acid polypeptide reads, in one-letter code: Putative carbamate hydrolase RutD (259 aa).

This sequence belongs to the AB hydrolase superfamily. Hydrolase RutD family.

It carries out the reaction carbamate + 2 H(+) = NH4(+) + CO2. Its function is as follows. Involved in pyrimidine catabolism. May facilitate the hydrolysis of carbamate, a reaction that can also occur spontaneously. The chain is Putative carbamate hydrolase RutD from Pseudomonas savastanoi pv. phaseolicola (strain 1448A / Race 6) (Pseudomonas syringae pv. phaseolicola (strain 1448A / Race 6)).